The sequence spans 501 residues: Phosphoethanolamine N-methyltransferase 1 (501 aa).

Residues Gly72, Arg77, Asp93, Asp118, Val119, and Asn137 each coordinate S-adenosyl-L-homocysteine. Residues Ser170, Thr175, Gly176, Arg180, and Tyr187 each contribute to the phosphocholine site. N-methylethanolamine phosphate-binding positions include 256 to 257 (QY) and Tyr265. Tyr265 is a phosphocholine binding site. Positions 274, 275, 301, 323, 349, 350, and 366 each coordinate S-adenosyl-L-homocysteine. Phosphocholine-binding residues include Tyr397, Tyr411, Arg415, Tyr417, and Lys483. N-methylethanolamine phosphate is bound by residues Tyr397, Tyr411, 415–417 (RGY), and Lys483.

This sequence belongs to the class I-like SAM-binding methyltransferase superfamily. PEAMT family.

The enzyme catalyses phosphoethanolamine + S-adenosyl-L-methionine = N-methylethanolamine phosphate + S-adenosyl-L-homocysteine + H(+). It catalyses the reaction N-methylethanolamine phosphate + S-adenosyl-L-methionine = N,N-dimethylethanolamine phosphate + S-adenosyl-L-homocysteine + H(+). It carries out the reaction N,N-dimethylethanolamine phosphate + S-adenosyl-L-methionine = phosphocholine + S-adenosyl-L-homocysteine + H(+). Its pathway is phospholipid metabolism; phosphatidylcholine biosynthesis; phosphocholine from phosphoethanolamine: step 1/1. Involved in phosphocholine biosynthesis. Catalyzes the N-methylation of phosphoethanolamine, phosphomonomethylethanolamine and phosphodimethylethanolamine, the three methylation steps required to convert phosphoethanolamine to phosphocholine (PC). May be involved in root development. This is Phosphoethanolamine N-methyltransferase 1 from Zea mays (Maize).